The primary structure comprises 147 residues: UPF0260 protein CJA_2436 (147 aa).

The protein belongs to the UPF0260 family.

The polypeptide is UPF0260 protein CJA_2436 (Cellvibrio japonicus (strain Ueda107) (Pseudomonas fluorescens subsp. cellulosa)).